The primary structure comprises 258 residues: uncharacterized protein (258 aa).

Helical transmembrane passes span 14 to 34 (LAFPWLSAVILNSFLLALAAI), 53 to 73 (VIIWAALGWRGYLVVLAYFFV), 110 to 130 (AALCALAIAFGPEPWQLWLAL), 185 to 205 (GLALAVLGYGVGLISFGGIIF), and 238 to 258 (GINTFLGAAIAIGIEATAQLI).

The protein belongs to the TMEM19 family.

It is found in the cell membrane. This is an uncharacterized protein from Synechocystis sp. (strain ATCC 27184 / PCC 6803 / Kazusa).